Here is a 589-residue protein sequence, read N- to C-terminus: Aspartate--tRNA(Asp/Asn) ligase (589 aa).

Glu175 is an L-aspartate binding site. The interval Gln199–Lys202 is aspartate. L-aspartate is bound at residue Arg221. Residues Arg221–Glu223 and Gln230 each bind ATP. His451 contacts L-aspartate. Glu485 contacts ATP. Arg492 serves as a coordination point for L-aspartate. Residue Gly537–Arg540 participates in ATP binding.

This sequence belongs to the class-II aminoacyl-tRNA synthetase family. Type 1 subfamily. As to quaternary structure, homodimer.

It localises to the cytoplasm. It catalyses the reaction tRNA(Asx) + L-aspartate + ATP = L-aspartyl-tRNA(Asx) + AMP + diphosphate. Functionally, aspartyl-tRNA synthetase with relaxed tRNA specificity since it is able to aspartylate not only its cognate tRNA(Asp) but also tRNA(Asn). Reaction proceeds in two steps: L-aspartate is first activated by ATP to form Asp-AMP and then transferred to the acceptor end of tRNA(Asp/Asn). The sequence is that of Aspartate--tRNA(Asp/Asn) ligase from Roseiflexus sp. (strain RS-1).